We begin with the raw amino-acid sequence, 751 residues long: Cellulose synthase-like protein G3 (751 aa).

2 helical membrane-spanning segments follow: residues 47–67 and 72–92; these read IYAV…VHSL and TTLI…MWAT. Active-site residues include Asp-161 and Asp-466. Transmembrane regions (helical) follow at residues 543-563, 577-597, 617-639, 674-694, 697-717, and 731-751; these read CWAF…LALL, FWLY…DFVL, FSSH…THGF, TVAI…FAWG, LVLE…IYEA, and VCFV…VFLK.

This sequence belongs to the glycosyltransferase 2 family. Plant cellulose synthase-like G subfamily.

It localises to the golgi apparatus membrane. In terms of biological role, thought to be a Golgi-localized beta-glycan synthase that polymerize the backbones of noncellulosic polysaccharides (hemicelluloses) of plant cell wall. This Arabidopsis thaliana (Mouse-ear cress) protein is Cellulose synthase-like protein G3 (CSLG3).